A 566-amino-acid polypeptide reads, in one-letter code: UvrABC system protein C (566 aa).

The GIY-YIG domain occupies 16–93 (EKPGVYLFKK…IQQYKPRYNV (78 aa)). The UVR domain occupies 199–234 (AEVLPKLYEKIEEFSKELMFEKCAHIRDQIIALENL).

The protein belongs to the UvrC family. As to quaternary structure, interacts with UvrB in an incision complex.

The protein resides in the cytoplasm. Its function is as follows. The UvrABC repair system catalyzes the recognition and processing of DNA lesions. UvrC both incises the 5' and 3' sides of the lesion. The N-terminal half is responsible for the 3' incision and the C-terminal half is responsible for the 5' incision. This is UvrABC system protein C from Aquifex aeolicus (strain VF5).